The sequence spans 547 residues: Vacuolar fusion protein MON1 homolog B (547 aa).

Met-1 carries the post-translational modification N-acetylmethionine. The span at 1-15 shows a compositional bias: low complexity; the sequence is MEVGGDTAAPAPGGA. The segment at 1–106 is disordered; that stretch reads MEVGGDTAAP…GGDPSDEEWR (106 aa). A phosphoserine mark is found at Ser-59 and Ser-61.

This sequence belongs to the MON1/SAND family. As to quaternary structure, interacts with CCNT2; down-regulates CCNT2-mediated activation of viral promoters during herpes simplex virus 1/HHV-1 infection. Found in a complex with RMC1, CCZ1 MON1A and MON1B.

The protein is Vacuolar fusion protein MON1 homolog B (MON1B) of Homo sapiens (Human).